The sequence spans 70 residues: ATP synthase subunit c (70 aa).

The next 2 helical transmembrane spans lie at 4-24 and 47-67; these read IATAIIIGLGALGAGIGNGLI and FIGIGLVEALPIIGVAVGFLL.

This sequence belongs to the ATPase C chain family. F-type ATPases have 2 components, F(1) - the catalytic core - and F(0) - the membrane proton channel. F(1) has five subunits: alpha(3), beta(3), gamma(1), delta(1), epsilon(1). F(0) has three main subunits: a(1), b(2) and c(10-14). The alpha and beta chains form an alternating ring which encloses part of the gamma chain. F(1) is attached to F(0) by a central stalk formed by the gamma and epsilon chains, while a peripheral stalk is formed by the delta and b chains.

Its subcellular location is the cell membrane. Functionally, f(1)F(0) ATP synthase produces ATP from ADP in the presence of a proton or sodium gradient. F-type ATPases consist of two structural domains, F(1) containing the extramembraneous catalytic core and F(0) containing the membrane proton channel, linked together by a central stalk and a peripheral stalk. During catalysis, ATP synthesis in the catalytic domain of F(1) is coupled via a rotary mechanism of the central stalk subunits to proton translocation. Its function is as follows. Key component of the F(0) channel; it plays a direct role in translocation across the membrane. A homomeric c-ring of between 10-14 subunits forms the central stalk rotor element with the F(1) delta and epsilon subunits. In Exiguobacterium sibiricum (strain DSM 17290 / CCUG 55495 / CIP 109462 / JCM 13490 / 255-15), this protein is ATP synthase subunit c.